Consider the following 417-residue polypeptide: Indole-3-pyruvate monooxygenase YUCCA6 (417 aa).

Residue 36–41 (GAGPSG) coordinates FAD. 204–209 (GCGNSG) lines the NADP(+) pocket.

This sequence belongs to the FMO family. Requires FAD as cofactor. Highly expressed in roots but modestly expressed in the cauline leaves and flowers. Expressed in anthers.

It localises to the cytoplasm. It carries out the reaction indole-3-pyruvate + NADPH + O2 + H(+) = (indol-3-yl)acetate + CO2 + NADP(+) + H2O. It functions in the pathway plant hormone metabolism; auxin biosynthesis. Functionally, involved in auxin biosynthesis via the indole-3-pyruvic acid (IPA) pathway. Also able to convert in vitro phenyl pyruvate (PPA) to phenyl acetic acid (PAA). Required for the formation of floral organs and vascular tissues. Belongs to the set of redundant YUCCA genes probably responsible for auxin biosynthesis in shoots. The protein is Indole-3-pyruvate monooxygenase YUCCA6 (YUC6) of Arabidopsis thaliana (Mouse-ear cress).